The chain runs to 293 residues: MSSGGGSRGLLAWLLLLQPWPGQNWAGMAAPRLPSPLLSEEGGENPEASPAPGPEAGPPLNLFTSFPGDSLLCGRTPLRIVGGVDAEEGRWPWQVSVRTKGRHICGGTLVTATWVLTAGHCISSRFHYSVKMGDRSVYNENTSVVVSVQRAFVHPKFSTVTTIRNDLALLQLQHPVNFTSNIQPICIPQENFQVEGRTRCWVTGWGKTPEREKLASEILQDVDQYIMCYEECNKIIQKALSSTKDVIIKGMVCGYKEQGKDSCQGDSGGRLACEYNDTWVQVGIVSWGIGCGR.

The first 26 residues, 1–26, serve as a signal peptide directing secretion; it reads MSSGGGSRGLLAWLLLLQPWPGQNWA. Positions 33–60 are disordered; it reads LPSPLLSEEGGENPEASPAPGPEAGPPL. Residues 80 to 293 enclose the Peptidase S1 domain; it reads IVGGVDAEEG…IVSWGIGCGR (214 aa). Cys-105 and Cys-121 are joined by a disulfide. Residue His-120 is the Charge relay system of the active site. N-linked (GlcNAc...) asparagine glycosylation occurs at Asn-141. The active-site Charge relay system is the Asp-166. Residue Asn-177 is glycosylated (N-linked (GlcNAc...) asparagine). 3 cysteine pairs are disulfide-bonded: Cys-200–Cys-273, Cys-232–Cys-253, and Cys-263–Cys-291. Catalysis depends on Ser-267, which acts as the Charge relay system. Asn-276 is a glycosylation site (N-linked (GlcNAc...) asparagine).

Belongs to the peptidase S1 family.

The protein resides in the cytoplasm. The protein localises to the cell membrane. Functionally, plays a role in spermatogenesis. Involved in germ cell survival during meiosis. The chain is Putative serine protease 42 from Homo sapiens (Human).